The primary structure comprises 150 residues: D-aminoacyl-tRNA deacylase (150 aa).

The Gly-cisPro motif, important for rejection of L-amino acids motif lies at 136 to 137; it reads GP.

Belongs to the DTD family. Homodimer.

It localises to the cytoplasm. The catalysed reaction is glycyl-tRNA(Ala) + H2O = tRNA(Ala) + glycine + H(+). It catalyses the reaction a D-aminoacyl-tRNA + H2O = a tRNA + a D-alpha-amino acid + H(+). In terms of biological role, an aminoacyl-tRNA editing enzyme that deacylates mischarged D-aminoacyl-tRNAs. Also deacylates mischarged glycyl-tRNA(Ala), protecting cells against glycine mischarging by AlaRS. Acts via tRNA-based rather than protein-based catalysis; rejects L-amino acids rather than detecting D-amino acids in the active site. By recycling D-aminoacyl-tRNA to D-amino acids and free tRNA molecules, this enzyme counteracts the toxicity associated with the formation of D-aminoacyl-tRNA entities in vivo and helps enforce protein L-homochirality. The polypeptide is D-aminoacyl-tRNA deacylase (Staphylococcus carnosus (strain TM300)).